Reading from the N-terminus, the 199-residue chain is Large ribosomal subunit protein eL13B (199 aa).

Thr-144 and Thr-152 each carry phosphothreonine.

This sequence belongs to the eukaryotic ribosomal protein eL13 family. Component of the large ribosomal subunit (LSU). Mature yeast ribosomes consist of a small (40S) and a large (60S) subunit. The 40S small subunit contains 1 molecule of ribosomal RNA (18S rRNA) and 33 different proteins (encoded by 57 genes). The large 60S subunit contains 3 rRNA molecules (25S, 5.8S and 5S rRNA) and 46 different proteins (encoded by 81 genes).

It localises to the cytoplasm. Functionally, component of the ribosome, a large ribonucleoprotein complex responsible for the synthesis of proteins in the cell. The small ribosomal subunit (SSU) binds messenger RNAs (mRNAs) and translates the encoded message by selecting cognate aminoacyl-transfer RNA (tRNA) molecules. The large subunit (LSU) contains the ribosomal catalytic site termed the peptidyl transferase center (PTC), which catalyzes the formation of peptide bonds, thereby polymerizing the amino acids delivered by tRNAs into a polypeptide chain. The nascent polypeptides leave the ribosome through a tunnel in the LSU and interact with protein factors that function in enzymatic processing, targeting, and the membrane insertion of nascent chains at the exit of the ribosomal tunnel. In Saccharomyces cerevisiae (strain ATCC 204508 / S288c) (Baker's yeast), this protein is Large ribosomal subunit protein eL13B.